We begin with the raw amino-acid sequence, 1197 residues long: Neural cell adhesion molecule L1.1 (1197 aa).

Ig-like C2-type domains are found at residues 1–58 (EFRQ…TAVS), 69–160 (PSLA…EPMS), 165–263 (PSNS…YTVT), 268–355 (PYWT…THVH), and 360–442 (PAQI…KSIS). Residues 1–1054 (EFRQRDPSPS…SPRNFATEGW (1054 aa)) lie on the Extracellular side of the membrane. The cysteines at positions 92 and 143 are disulfide-linked. N-linked (GlcNAc...) asparagine glycosylation is found at Asn-135, Asn-149, Asn-221, Asn-298, Asn-414, Asn-421, Asn-438, and Asn-449. Disulfide bonds link Cys-199–Cys-247, Cys-289–Cys-339, and Cys-383–Cys-432. Positions 451-541 (TKIVGPPQNL…DSDTASGYIT (91 aa)) constitute an Ig-like C2-type 6 domain. An intrachain disulfide couples Cys-472 to Cys-525. Fibronectin type-III domains lie at 548 to 643 (PPQS…TPAA), 645 to 742 (PDTN…SGED), 747 to 852 (APSA…TPEG), 853 to 952 (APGP…LLDG), and 953 to 1048 (EPPS…SPRN). Positions 630 to 640 (APTESSLSYST) are enriched in polar residues. Positions 630-655 (APTESSLSYSTPAAKPDTNPENVMTL) are disordered. N-linked (GlcNAc...) asparagine glycosylation occurs at Asn-708. Residues Asn-959, Asn-968, Asn-1002, and Asn-1027 are each glycosylated (N-linked (GlcNAc...) asparagine). Residues 1055–1075 (FIGLISALVLLLLVLLLLCYI) form a helical membrane-spanning segment. Residues 1076 to 1197 (KKSKGGKYSV…TSVTGILGPN (122 aa)) lie on the Cytoplasmic side of the membrane. 2 disordered regions span residues 1115–1135 (MEKC…SNDS) and 1154–1197 (IGQY…LGPN).

The protein belongs to the immunoglobulin superfamily. L1/neurofascin/NgCAM family. In terms of tissue distribution, expressed in postmitotic neurons in 16-36 hours embryos, including those in the brain, cranial ganglia and otic and olfactory placodes, and in all classes of spinal neurons.

It is found in the cell membrane. The protein resides in the cell projection. Its subcellular location is the growth cone. Its function is as follows. Cell adhesion molecule with an important role in the development of the nervous system. Involved in neuron-neuron adhesion, neurite fasciculation, outgrowth of neurites, etc. Binds to axonin on neurons. In Danio rerio (Zebrafish), this protein is Neural cell adhesion molecule L1.1 (nadl1.1).